The sequence spans 146 residues: Monothiol glutaredoxin-5, mitochondrial (146 aa).

One can recognise a Glutaredoxin domain in the interval 26 to 131; that stretch reads RQALEQAVKE…KILKEINALA (106 aa). K43 lines the glutathione pocket. Position 51 (C51) interacts with [2Fe-2S] cluster. Glutathione-binding positions include 83–87, I95, and 108–109; these read REGIK and SD.

This sequence belongs to the glutaredoxin family. Monothiol subfamily. Homodimer. Interacts with ISA1 and ISA2.

The protein resides in the mitochondrion. Monothiol glutaredoxin involved in mitochondrial iron-sulfur (Fe/S) cluster transfer. Receives 2Fe/2S clusters from scaffold protein isu1 and mediates their transfer to apoproteins, to the 4Fe/FS cluster biosynthesis machinery, or export from mitochondrion. The sequence is that of Monothiol glutaredoxin-5, mitochondrial from Schizosaccharomyces pombe (strain 972 / ATCC 24843) (Fission yeast).